The primary structure comprises 135 residues: Lymphocyte antigen 6 complex locus protein G6d (135 aa).

Positions 1–19 are cleaved as a signal peptide; it reads MNSQLVGILLSALLGVALG. Residues 22-121 form the UPAR/Ly6 domain; sequence TRCYDCGGGP…ASSVTPLCIL (100 aa). Cystine bridges form between Cys24–Cys48, Cys27–Cys35, Cys42–Cys76, Cys82–Cys101, and Cys102–Cys107. Thr68 carries O-linked (GalNAc...) threonine glycosylation. Residue Asn108 is the site of GPI-anchor amidated asparagine attachment. A propeptide spans 109–135 (removed in mature form); that stretch reads SAVASSVTPLCILAAAVTTLAWLLPGL.

Homodimer. In terms of processing, O-glycosylated. As to expression, expressed in embryonic tissue and adult lung, kidney, brain, liver and spleen.

Its subcellular location is the cell membrane. It localises to the cell projection. The protein localises to the filopodium. This chain is Lymphocyte antigen 6 complex locus protein G6d (Ly6g6d), found in Mus musculus (Mouse).